The sequence spans 396 residues: dTDP-epi-vancosaminyltransferase (396 aa).

DTDP-beta-L-4-epi-vancosamine is bound at residue 10–12 (SRG). Residues aspartate 127, glutamine 133, tyrosine 141, and tyrosine 169 each coordinate devancoaminyl-vancomycin. DTDP-beta-L-4-epi-vancosamine contacts are provided by residues arginine 207, serine 230, 277 to 278 (EV), and 293 to 298 (HDSAGT).

It belongs to the glycosyltransferase 28 family.

The enzyme catalyses dTDP-beta-L-4-epi-vancosamine + devancoaminyl-vancomycin = chloroorienticin B + dTDP + H(+). Its pathway is antibiotic biosynthesis; vancomycin biosynthesis. Its function is as follows. Catalyzes the attachment of 4-epi-vancosamine from a TDP donor to the beta-OH-Tyr-6 of the aglycone cosubstrate in the biosynthesis of glycopeptide antibiotic chloroeremomycin, a member of the vancomycin group of antibiotics. Strongly prefers devancoaminyl-vancomycin (DVV) as substrate rather than the heptapeptide vancomycin aglycone (AGV). Acts downstream of GtfB. The sequence is that of dTDP-epi-vancosaminyltransferase (gtfA) from Amycolatopsis orientalis (Nocardia orientalis).